We begin with the raw amino-acid sequence, 347 residues long: Protein-glutamate methylesterase/protein-glutamine glutaminase (347 aa).

The region spanning 3–119 (EALVVDDSHF…STELSGHSEE (117 aa)) is the Response regulatory domain. 4-aspartylphosphate is present on aspartate 53. Positions 132 to 154 (PTAGHDVEMEPASPPDATTSEYA) are disordered. Residues 152-346 (EYADNPTLLI…EAIADSIRRT (195 aa)) form the CheB-type methylesterase domain. Residues serine 164, histidine 191, and aspartate 288 contribute to the active site.

This sequence belongs to the CheB family. Post-translationally, phosphorylated by CheA. Phosphorylation of the N-terminal regulatory domain activates the methylesterase activity.

It is found in the cytoplasm. The catalysed reaction is [protein]-L-glutamate 5-O-methyl ester + H2O = L-glutamyl-[protein] + methanol + H(+). The enzyme catalyses L-glutaminyl-[protein] + H2O = L-glutamyl-[protein] + NH4(+). Functionally, involved in the modulation of the chemotaxis system; catalyzes the demethylation of specific methylglutamate residues introduced into the Htr transducer proteins (methyl-accepting chemotaxis proteins) by CheR. Also required for Htr deamidations, at least at a specific glutamine-glutamate pair in HTR-II and a specific aspartate-glutamine pair in Htr4. The protein is Protein-glutamate methylesterase/protein-glutamine glutaminase of Halobacterium salinarum (strain ATCC 29341 / DSM 671 / R1).